We begin with the raw amino-acid sequence, 219 residues long: UPF0173 metal-dependent hydrolase Mhun_1705 (219 aa).

Belongs to the UPF0173 family.

This Methanospirillum hungatei JF-1 (strain ATCC 27890 / DSM 864 / NBRC 100397 / JF-1) protein is UPF0173 metal-dependent hydrolase Mhun_1705.